Reading from the N-terminus, the 447-residue chain is DNA primase DnaG (447 aa).

Positions 200 to 274 constitute a Toprim domain; the sequence is DSIIVVEGRA…DIDYVARAPE (75 aa). 3 residues coordinate Mg(2+): Glu-206, Asp-248, and Asp-250.

It belongs to the archaeal DnaG primase family. As to quaternary structure, forms a ternary complex with MCM helicase and DNA. Component of the archaeal exosome complex. It depends on Mg(2+) as a cofactor.

It carries out the reaction ssDNA + n NTP = ssDNA/pppN(pN)n-1 hybrid + (n-1) diphosphate.. Its function is as follows. RNA polymerase that catalyzes the synthesis of short RNA molecules used as primers for DNA polymerase during DNA replication. Also part of the exosome, which is a complex involved in RNA degradation. Acts as a poly(A)-binding protein that enhances the interaction between heteromeric, adenine-rich transcripts and the exosome. The sequence is that of DNA primase DnaG from Pyrococcus horikoshii (strain ATCC 700860 / DSM 12428 / JCM 9974 / NBRC 100139 / OT-3).